The sequence spans 151 residues: Ribosomal RNA large subunit methyltransferase H (151 aa).

S-adenosyl-L-methionine contacts are provided by residues leucine 73, glycine 100, and 119–124 (LSDLTM).

This sequence belongs to the RNA methyltransferase RlmH family. Homodimer.

Its subcellular location is the cytoplasm. It catalyses the reaction pseudouridine(1915) in 23S rRNA + S-adenosyl-L-methionine = N(3)-methylpseudouridine(1915) in 23S rRNA + S-adenosyl-L-homocysteine + H(+). Its function is as follows. Specifically methylates the pseudouridine at position 1915 (m3Psi1915) in 23S rRNA. This chain is Ribosomal RNA large subunit methyltransferase H, found in Aliarcobacter butzleri (strain RM4018) (Arcobacter butzleri).